We begin with the raw amino-acid sequence, 1098 residues long: MTQCASRRKSTPNRAILGAFASARGTRWVATIAGLIGFVLSVATPLLPVVQTTAMLDWPQRGQLGSVTAPLISLTPVDFTATVPCDVVRAMPPAGGVVLGTAPKQGKDANLQALFVVVSAQRVDVTDRNVVILSVPREQVTSPQCQRIEVTSTHAGTFANFVGLKDPSGAPLRSGFPDPNLRPQIVGVFTDLTGPAPPGLAVSATIDTRFSTRPTTLKLLAIIGAIVATVVALIALWRLDQLDGRGSIAQLLLRPFRPASSPGGMRRLIPASWRTFTLTDAVVIFGFLLWHVIGANSSDDGYILGMARVADHAGYMSNYFRWFGSPEDPFGWYYNLLALMTHVSDASLWMRLPDLAAGLVCWLLLSREVLPRLGPAVEASKPAYWAAAMVLLTAWMPFNNGLRPEGIIALGSLVTYVLIERSMRYSRLTPAALAVVTAAFTLGVQPTGLIAVAALVAGGRPMLRILVRRHRLVGTLPLVSPMLAAGTVILTVVFADQTLSTVLEATRVRAKIGPSQAWYTENLRYYYLILPTVDGSLSRRFGFLITALCLFTAVFIMLRRKRIPSVARGPAWRLMGVIFGTMFFLMFTPTKWVHHFGLFAAVGAAMAALTTVLVSPSVLRWSRNRMAFLAALFFLLALCWATTNGWWYVSSYGVPFNSAMPKIDGITVSTIFFALFAIAAGYAAWLHFAPRGAGEGRLIRALTTAPVPIVAGFMAAVFVASMVAGIVRQYPTYSNGWSNVRAFVGGCGLADDVLVEPDTNAGFMKPLDGDSGSWGPLGPLGGVNPVGFTPNGVPEHTVAEAIVMKPNQPGTDYDWDAPTKLTSPGINGSTVPLPYGLDPARVPLAGTYTTGAQQQSTLVSAWYLLPKPDDGHPLVVVTAAGKIAGNSVLHGYTPGQTVVLEYAMPGPGALVPAGRMVPDDLYGEQPKAWRNLRFARAKMPADAVAVRVVAEDLSLTPEDWIAVTPPRVPDLRSLQEYVGSTQPVLLDWAVGLAFPCQQPMLHANGIAEIPKFRITPDYSAKKLDTDTWEDGTNGGLLGITDLLLRAHVMATYLSRDWARDWGSLRKFDTLVDAPPAQLELGTATRSGLWSPGKIRIGP.

The next 12 helical transmembrane spans lie at 28-50 (WVAT…LPVV), 217-239 (LKLL…LWRL), 271-293 (ASWR…WHVI), 402-419 (LRPE…YVLI), 434-456 (AVVT…AALV), 472-494 (LVGT…TVVF), 541-558 (FGFL…FIML), 570-587 (PAWR…FLMF), 597-619 (GLFA…PSVL), 626-648 (MAFL…GWWY), 663-685 (IDGI…YAAW), and 698-720 (LIRA…VFVA).

This sequence belongs to the emb family.

Its subcellular location is the cell membrane. Arabinosyl transferase responsible for the polymerization of arabinose into the arabinan of arabinogalactan. This Mycobacterium tuberculosis (strain CDC 1551 / Oshkosh) protein is Probable arabinosyltransferase B (embB).